Consider the following 440-residue polypeptide: ASTRA-associated protein 1 (440 aa).

WD repeat units follow at residues 21-60, 66-107, 205-245, 264-303, 315-354, and 406-440; these read GHAA…PRAT, GTVL…ESLQ, TGMV…QEKD, AHSQ…SPGH, TKHA…ELAV, and FSLA…WDIY.

The protein belongs to the WD repeat ASA1 family. As to quaternary structure, component of the ASTRA chromatin remodeling machinery complex.

The protein resides in the nucleus. In terms of biological role, component of the ASTRA complex involved in chromatin remodeling. This chain is ASTRA-associated protein 1 (asa1), found in Aspergillus niger (strain ATCC MYA-4892 / CBS 513.88 / FGSC A1513).